Here is a 23-residue protein sequence, read N- to C-terminus: Basic phospholipase A2 homolog (23 aa).

Post-translationally, contains 7 disulfide bonds. In terms of tissue distribution, expressed by the venom gland.

It localises to the secreted. This is Basic phospholipase A2 homolog from Trimeresurus stejnegeri (Chinese green tree viper).